The chain runs to 367 residues: Ribosomal lysine N-methyltransferase 5 (367 aa).

Residues 55–74 are disordered; that stretch reads EGGRKKKRVRRRNKASSVEE. Basic residues predominate over residues 58–68; it reads RKKKRVRRRNK. Residues W110, 170–172, D192, W256, and M288 each bind S-adenosyl-L-methionine; that span reads GAG.

Belongs to the class I-like SAM-binding methyltransferase superfamily. RKM5 family.

In terms of biological role, S-adenosyl-L-methionine-dependent protein-lysine N-methyltransferase that monomethylates 60S ribosomal protein L1 (RPL1A and RPL1B) at 'Lys-46'. The chain is Ribosomal lysine N-methyltransferase 5 (RKM5) from Saccharomyces cerevisiae (strain RM11-1a) (Baker's yeast).